Reading from the N-terminus, the 567-residue chain is Wee1-like protein kinase 2 (567 aa).

4 stretches are compositionally biased toward basic and acidic residues: residues 1–12 (MDDKDIDKELRQ), 25–35 (EGQKKVEESRE), 42–51 (EKGEVQDSEA), and 64–77 (HELD…KESP). Residues 1–117 (MDDKDIDKEL…DSPSTPKTML (117 aa)) are disordered. Position 76 is a phosphoserine (S76). Residues 173-175 (KRK) carry the Nuclear localization signal motif. One can recognise a Protein kinase domain in the interval 212–486 (FLEVEKIGVG…AAALARNTVL (275 aa)). ATP-binding positions include 218-226 (IGVGEFGTV) and K241. The short motif at 315 to 329 (KLKDILLQISLGLNY) is the Nuclear export signal element. Residue D339 is the Proton acceptor of the active site. Mg(2+)-binding residues include N344 and D380. A coiled-coil region spans residues 494–519 (EELQQQLNLEKFKTATLERELREAQQ). Residues 514–567 (LREAQQAQSPQGYTHHGDTGVSGTHTGSRSTKRLVGGKSARSSSFTSGEREPLH) are disordered.

This sequence belongs to the protein kinase superfamily. Ser/Thr protein kinase family. WEE1 subfamily. In terms of processing, phosphorylated on serine residues. Phosphorylation leads to increase its activity. In terms of tissue distribution, expressed in oocytes (at protein level). May also be expressed in testis.

The protein localises to the nucleus. The enzyme catalyses L-tyrosyl-[protein] + ATP = O-phospho-L-tyrosyl-[protein] + ADP + H(+). In terms of biological role, oocyte-specific protein tyrosine kinase that phosphorylates and inhibits CDK1/CDC2 and acts as a key regulator of meiosis during both prophase I and metaphase II. Required to maintain meiotic arrest in oocytes during the germinal vesicle (GV) stage, a long period of quiescence at dictyate prophase I, by phosphorylating CDK1 at 'Tyr-15', leading to inhibit CDK1 activity and prevent meiotic reentry. Also required for metaphase II exit during egg activation by phosphorylating CDK1 at 'Tyr-15', to ensure exit from meiosis in oocytes and promote pronuclear formation. The chain is Wee1-like protein kinase 2 (WEE2) from Homo sapiens (Human).